A 95-amino-acid chain; its full sequence is Co-chaperonin GroES (95 aa).

This sequence belongs to the GroES chaperonin family. Heptamer of 7 subunits arranged in a ring. Interacts with the chaperonin GroEL.

It localises to the cytoplasm. In terms of biological role, together with the chaperonin GroEL, plays an essential role in assisting protein folding. The GroEL-GroES system forms a nano-cage that allows encapsulation of the non-native substrate proteins and provides a physical environment optimized to promote and accelerate protein folding. GroES binds to the apical surface of the GroEL ring, thereby capping the opening of the GroEL channel. The polypeptide is Co-chaperonin GroES (Rickettsia typhi (strain ATCC VR-144 / Wilmington)).